The sequence spans 102 residues: Small ribosomal subunit protein uS14 (102 aa).

This sequence belongs to the universal ribosomal protein uS14 family. In terms of assembly, part of the 30S ribosomal subunit. Contacts proteins S3 and S10.

Its function is as follows. Binds 16S rRNA, required for the assembly of 30S particles and may also be responsible for determining the conformation of the 16S rRNA at the A site. This chain is Small ribosomal subunit protein uS14, found in Wolbachia pipientis subsp. Culex pipiens (strain wPip).